The following is a 365-amino-acid chain: Probable caffeine synthase 2 (365 aa).

Tyr19 contacts S-adenosyl-L-homocysteine. Position 26 (Thr26) interacts with caffeine. S-adenosyl-L-homocysteine-binding residues include Cys62, Asp99, Leu100, Ser134, and Phe135. The caffeine site is built by Tyr152, His155, and Trp156. Asn173 is a Mg(2+) binding site. A caffeine-binding site is contributed by Arg221. Mg(2+) contacts are provided by Asp259, Phe261, and Asn262. Phe317 contacts caffeine.

This sequence belongs to the methyltransferase superfamily. Type-7 methyltransferase family. The cofactor is Mg(2+).

The enzyme catalyses 7-methylxanthine + S-adenosyl-L-methionine = theobromine + S-adenosyl-L-homocysteine + H(+). The catalysed reaction is theobromine + S-adenosyl-L-methionine = caffeine + S-adenosyl-L-homocysteine + H(+). It carries out the reaction 1,7-dimethylxanthine + S-adenosyl-L-methionine = caffeine + S-adenosyl-L-homocysteine + H(+). The protein operates within alkaloid biosynthesis. In terms of biological role, may be involved in the biosynthesis of caffeine. Catalyzes the conversion of 7-methylxanthine (7mX) to theobromine and of theobromine to caffeine. Has 1-N-methylation activity. This is Probable caffeine synthase 2 from Camellia sinensis (Tea plant).